Here is a 417-residue protein sequence, read N- to C-terminus: CinA-like protein (417 aa).

Belongs to the CinA family.

The protein is CinA-like protein of Microcystis aeruginosa (strain NIES-843 / IAM M-2473).